The following is a 208-amino-acid chain: High frequency lysogenization protein HflD homolog (208 aa).

Belongs to the HflD family.

The protein localises to the cytoplasm. The protein resides in the cell inner membrane. This Photorhabdus laumondii subsp. laumondii (strain DSM 15139 / CIP 105565 / TT01) (Photorhabdus luminescens subsp. laumondii) protein is High frequency lysogenization protein HflD homolog.